A 174-amino-acid chain; its full sequence is UPF0316 protein LMOf2365_1801 (174 aa).

3 helical membrane passes run 4–24, 36–56, and 62–82; these read GIFI…IYTV, LAAL…SLVL, and IANV…GMKI.

The protein belongs to the UPF0316 family.

Its subcellular location is the cell membrane. The protein is UPF0316 protein LMOf2365_1801 of Listeria monocytogenes serotype 4b (strain F2365).